The following is a 150-amino-acid chain: UPF0756 membrane protein HD_1071 (150 aa).

Helical transmembrane passes span 1-21, 52-72, 82-102, and 114-134; these read MSLQFNPIGLFLVALILLGVL, YGLTIGIIILTIGVLSPIVSG, ILSWKMALAISIGIFVAWLGG, and IITGLLIGTIIGIAFFGGIPV.

Belongs to the UPF0756 family.

It localises to the cell membrane. This Haemophilus ducreyi (strain 35000HP / ATCC 700724) protein is UPF0756 membrane protein HD_1071.